A 202-amino-acid polypeptide reads, in one-letter code: Endothelin-1 (202 aa).

The N-terminal stretch at 1 to 25 (MDYFPMIFALLFVAFQGAPEAAVLG) is a signal peptide. Positions 26-50 (TELSAGAEDGGEKPAPATPWRPRRS) are excised as a propeptide. 2 disulfides stabilise this stretch: Cys-53/Cys-67 and Cys-55/Cys-63. The propeptide occupies 74 to 202 (VNTPEHVVPY…DKKVIYNRAH (129 aa)). The interval 110-124 (CQCASQTDKKCWNFC) is endothelin-like.

This sequence belongs to the endothelin/sarafotoxin family.

Its subcellular location is the secreted. Endothelins are endothelium-derived vasoconstrictor peptides. Probable ligand for G-protein coupled receptors EDNRA and EDNRB which activates PTK2B, BCAR1, BCAR3 and, GTPases RAP1 and RHOA cascade in glomerular mesangial cells. Also binds the DEAR/FBXW7-AS1 receptor. Promotes mesenteric arterial wall remodeling via activation of ROCK signaling and subsequent colocalization of NFATC3 with F-actin filaments. NFATC3 then translocates to the nucleus where it subsequently promotes the transcription of the smooth muscle hypertrophy and differentiation marker ACTA2. This Bos taurus (Bovine) protein is Endothelin-1 (EDN1).